The primary structure comprises 1342 residues: DNA-directed RNA polymerase subunit beta (1342 aa).

It belongs to the RNA polymerase beta chain family. The RNAP catalytic core consists of 2 alpha, 1 beta, 1 beta' and 1 omega subunit. When a sigma factor is associated with the core the holoenzyme is formed, which can initiate transcription.

The enzyme catalyses RNA(n) + a ribonucleoside 5'-triphosphate = RNA(n+1) + diphosphate. Its function is as follows. DNA-dependent RNA polymerase catalyzes the transcription of DNA into RNA using the four ribonucleoside triphosphates as substrates. In Salmonella agona (strain SL483), this protein is DNA-directed RNA polymerase subunit beta.